The sequence spans 278 residues: Rhomboid protease GlpG (278 aa).

The next 6 helical transmembrane spans lie at Ala94–Ile114, Ala143–Gly163, Leu175–Gly195, Ala196–Gly216, Ile224–Gly241, and Ile245–Phe267. Ser202 functions as the Nucleophile in the catalytic mechanism. His255 is an active-site residue.

Belongs to the peptidase S54 family.

It is found in the cell inner membrane. It carries out the reaction Cleaves type-1 transmembrane domains using a catalytic dyad composed of serine and histidine that are contributed by different transmembrane domains.. Rhomboid-type serine protease that catalyzes intramembrane proteolysis. In Yersinia pseudotuberculosis serotype I (strain IP32953), this protein is Rhomboid protease GlpG.